We begin with the raw amino-acid sequence, 201 residues long: Recombination protein RecR (201 aa).

The segment at 57-72 adopts a C4-type zinc-finger fold; the sequence is CADCRTFTEQEVCNIC. In terms of domain architecture, Toprim spans 81-176; sequence GQICVVESPA…DASRIAHGVP (96 aa).

The protein belongs to the RecR family.

Functionally, may play a role in DNA repair. It seems to be involved in an RecBC-independent recombinational process of DNA repair. It may act with RecF and RecO. The sequence is that of Recombination protein RecR from Klebsiella pneumoniae subsp. pneumoniae (strain ATCC 700721 / MGH 78578).